We begin with the raw amino-acid sequence, 101 residues long: NADH-quinone oxidoreductase subunit K (101 aa).

Helical transmembrane passes span 4–24 (LTHY…GIFL), 30–50 (IVLL…FIAF), and 61–81 (IFVF…LAIL).

The protein belongs to the complex I subunit 4L family. In terms of assembly, NDH-1 is composed of 14 different subunits. Subunits NuoA, H, J, K, L, M, N constitute the membrane sector of the complex.

It localises to the cell inner membrane. The enzyme catalyses a quinone + NADH + 5 H(+)(in) = a quinol + NAD(+) + 4 H(+)(out). In terms of biological role, NDH-1 shuttles electrons from NADH, via FMN and iron-sulfur (Fe-S) centers, to quinones in the respiratory chain. The immediate electron acceptor for the enzyme in this species is believed to be ubiquinone. Couples the redox reaction to proton translocation (for every two electrons transferred, four hydrogen ions are translocated across the cytoplasmic membrane), and thus conserves the redox energy in a proton gradient. The polypeptide is NADH-quinone oxidoreductase subunit K (Laribacter hongkongensis (strain HLHK9)).